Consider the following 208-residue polypeptide: Protein GrpE (208 aa).

The segment covering 1–25 has biased composition (basic and acidic residues); the sequence is MVDNKDFNEELKESIQEELDNETKS. The tract at residues 1–38 is disordered; sequence MVDNKDFNEELKESIQEELDNETKSENPNIDEEVEEVS. The span at 29 to 38 shows a compositional bias: acidic residues; sequence NIDEEVEEVS.

This sequence belongs to the GrpE family. In terms of assembly, homodimer.

It is found in the cytoplasm. Functionally, participates actively in the response to hyperosmotic and heat shock by preventing the aggregation of stress-denatured proteins, in association with DnaK and GrpE. It is the nucleotide exchange factor for DnaK and may function as a thermosensor. Unfolded proteins bind initially to DnaJ; upon interaction with the DnaJ-bound protein, DnaK hydrolyzes its bound ATP, resulting in the formation of a stable complex. GrpE releases ADP from DnaK; ATP binding to DnaK triggers the release of the substrate protein, thus completing the reaction cycle. Several rounds of ATP-dependent interactions between DnaJ, DnaK and GrpE are required for fully efficient folding. The sequence is that of Protein GrpE from Clostridium perfringens (strain SM101 / Type A).